A 199-amino-acid polypeptide reads, in one-letter code: Ubiquitin-conjugating enzyme E2-22 kDa (199 aa).

In terms of domain architecture, UBC core spans 4-154 (MAVSRIKREF…AKHWTNAYAG (151 aa)). Cys-92 serves as the catalytic Glycyl thioester intermediate. A UBA domain is found at 161-199 (DCDSKIQRLRDMGIDEHEARAVLSKENWNLEKATEGLFS).

Belongs to the ubiquitin-conjugating enzyme family. In terms of assembly, interacts with Rpn10. During gastrulation, expression is highest in the invaginating posterior midgut primordium (PMG), high expression is also observed in the cephalic furrow and ventral ectodermal neurogenic region. In stage 10-11 embryos, expression is high in the pole cells present in the pocket formed by the PMG. During germ band retraction, expression appears to reinitiate in many tissues, especially the gut and nervous system. After dorsal closure, expression is detectable at low levels throughout the embryo.

It catalyses the reaction S-ubiquitinyl-[E1 ubiquitin-activating enzyme]-L-cysteine + [E2 ubiquitin-conjugating enzyme]-L-cysteine = [E1 ubiquitin-activating enzyme]-L-cysteine + S-ubiquitinyl-[E2 ubiquitin-conjugating enzyme]-L-cysteine.. It functions in the pathway protein modification; protein ubiquitination. Its function is as follows. Catalyzes the covalent attachment of ubiquitin to other proteins. The chain is Ubiquitin-conjugating enzyme E2-22 kDa from Drosophila melanogaster (Fruit fly).